Consider the following 616-residue polypeptide: uncharacterized protein (616 aa).

Disordered regions lie at residues 166–243 and 272–298; these read SRTY…TPEL and DHEE…IEEI. Residues 184 to 200 show a composition bias toward basic and acidic residues; it reads RVDESRPSENSSRHDYV. A compositionally biased stretch (polar residues) spans 221 to 237; that stretch reads TRTSNVTQTQPPTNQVF. Over residues 272-287 the composition is skewed to acidic residues; it reads DHEEEEGQDDDEETEI. Positions 343–417 constitute a Ubiquitin-like domain; the sequence is ILIKLKFMND…VHCHISTTPY (75 aa).

This is an uncharacterized protein from Caenorhabditis elegans.